The following is a 231-amino-acid chain: Endonuclease NucS (231 aa).

It belongs to the NucS endonuclease family.

Its subcellular location is the cytoplasm. Functionally, cleaves both 3' and 5' ssDNA extremities of branched DNA structures. This chain is Endonuclease NucS, found in Pseudarthrobacter chlorophenolicus (strain ATCC 700700 / DSM 12829 / CIP 107037 / JCM 12360 / KCTC 9906 / NCIMB 13794 / A6) (Arthrobacter chlorophenolicus).